Reading from the N-terminus, the 176-residue chain is Thiol-disulfide oxidoreductase ResA (176 aa).

The helical; Signal-anchor for type II membrane protein transmembrane segment at 11–30 threads the bilayer; that stretch reads LSILAVISVALGYTFYSNFF. One can recognise a Thioredoxin domain in the interval 36–176; sequence ARAGEQAVNF…EFMELIKPEA (141 aa). Cys74 and Cys77 form a disulfide bridge.

Belongs to the thioredoxin family. ResA subfamily.

It is found in the cell membrane. The protein operates within protein modification; cytochrome c assembly. Functionally, thiol-disulfide oxidoreductase which is required in disulfide reduction during c-type cytochrome synthesis. May accept reducing equivalents from CcdA, leading to breakage of disulfide bonds in apocytochrome c; following this reduction heme can be covalently attached. This is Thiol-disulfide oxidoreductase ResA from Halalkalibacterium halodurans (strain ATCC BAA-125 / DSM 18197 / FERM 7344 / JCM 9153 / C-125) (Bacillus halodurans).